The chain runs to 237 residues: Orotate phosphoribosyltransferase (237 aa).

Lysine 29 lines the 5-phospho-alpha-D-ribose 1-diphosphate pocket. Phenylalanine 37–phenylalanine 38 serves as a coordination point for orotate. 5-phospho-alpha-D-ribose 1-diphosphate is bound by residues tyrosine 79–lysine 80, arginine 105, lysine 106, lysine 109, histidine 111, and aspartate 130–alanine 138. Orotate-binding residues include serine 134 and arginine 162.

The protein belongs to the purine/pyrimidine phosphoribosyltransferase family. PyrE subfamily. As to quaternary structure, homodimer. It depends on Mg(2+) as a cofactor.

It carries out the reaction orotidine 5'-phosphate + diphosphate = orotate + 5-phospho-alpha-D-ribose 1-diphosphate. It functions in the pathway pyrimidine metabolism; UMP biosynthesis via de novo pathway; UMP from orotate: step 1/2. Its function is as follows. Catalyzes the transfer of a ribosyl phosphate group from 5-phosphoribose 1-diphosphate to orotate, leading to the formation of orotidine monophosphate (OMP). The chain is Orotate phosphoribosyltransferase from Polaromonas naphthalenivorans (strain CJ2).